A 298-amino-acid chain; its full sequence is Elongation factor Ts (298 aa).

Positions threonine 79–valine 82 are involved in Mg(2+) ion dislocation from EF-Tu.

The protein belongs to the EF-Ts family.

It is found in the cytoplasm. Its function is as follows. Associates with the EF-Tu.GDP complex and induces the exchange of GDP to GTP. It remains bound to the aminoacyl-tRNA.EF-Tu.GTP complex up to the GTP hydrolysis stage on the ribosome. The chain is Elongation factor Ts (tsf) from Mycoplasma pneumoniae (strain ATCC 29342 / M129 / Subtype 1) (Mycoplasmoides pneumoniae).